A 324-amino-acid chain; its full sequence is NADH-ubiquinone oxidoreductase chain 1 (324 aa).

Transmembrane regions (helical) follow at residues 5–25 (ILLYLINPLAYIVPILLATAF), 75–95 (FLFLATPTLALTLALLMWMPL), 106–126 (LGLLFILAVSSLTVYTILGSG), 146–166 (ISYEVSLGLILLSMIIFTGGF), 177–197 (TVWLLVPGWPLAMMWYISTLA), 228–248 (LFFLAEYTNILMMNTLSVILF), 259–279 (QISTFYLMMKATLLTLIFLWI), and 299–319 (FLPLTLALILWHAALPIATAS).

It belongs to the complex I subunit 1 family.

The protein localises to the mitochondrion inner membrane. The catalysed reaction is a ubiquinone + NADH + 5 H(+)(in) = a ubiquinol + NAD(+) + 4 H(+)(out). Its function is as follows. Core subunit of the mitochondrial membrane respiratory chain NADH dehydrogenase (Complex I) that is believed to belong to the minimal assembly required for catalysis. Complex I functions in the transfer of electrons from NADH to the respiratory chain. The immediate electron acceptor for the enzyme is believed to be ubiquinone. The chain is NADH-ubiquinone oxidoreductase chain 1 (MT-ND1) from Squalus acanthias (Spiny dogfish).